The primary structure comprises 279 residues: Putative pyruvate, phosphate dikinase regulatory protein (279 aa).

153–160 is a binding site for ADP; it reads GVSRTSKT.

Belongs to the pyruvate, phosphate/water dikinase regulatory protein family. PDRP subfamily.

It carries out the reaction N(tele)-phospho-L-histidyl/L-threonyl-[pyruvate, phosphate dikinase] + ADP = N(tele)-phospho-L-histidyl/O-phospho-L-threonyl-[pyruvate, phosphate dikinase] + AMP + H(+). The enzyme catalyses N(tele)-phospho-L-histidyl/O-phospho-L-threonyl-[pyruvate, phosphate dikinase] + phosphate + H(+) = N(tele)-phospho-L-histidyl/L-threonyl-[pyruvate, phosphate dikinase] + diphosphate. Its function is as follows. Bifunctional serine/threonine kinase and phosphorylase involved in the regulation of the pyruvate, phosphate dikinase (PPDK) by catalyzing its phosphorylation/dephosphorylation. The polypeptide is Putative pyruvate, phosphate dikinase regulatory protein (Bradyrhizobium sp. (strain ORS 278)).